The sequence spans 206 residues: Small ribosomal subunit protein uS4 (206 aa).

Residues 96–157 enclose the S4 RNA-binding domain; the sequence is SRLDNVVYRM…KAKNQARIQN (62 aa).

This sequence belongs to the universal ribosomal protein uS4 family. As to quaternary structure, part of the 30S ribosomal subunit. Contacts protein S5. The interaction surface between S4 and S5 is involved in control of translational fidelity.

Its function is as follows. One of the primary rRNA binding proteins, it binds directly to 16S rRNA where it nucleates assembly of the body of the 30S subunit. Functionally, with S5 and S12 plays an important role in translational accuracy. The chain is Small ribosomal subunit protein uS4 from Chromohalobacter salexigens (strain ATCC BAA-138 / DSM 3043 / CIP 106854 / NCIMB 13768 / 1H11).